We begin with the raw amino-acid sequence, 403 residues long: GPI-N-acetylgalactosamine transferase PGAP4 (403 aa).

Topologically, residues M1–S22 are cytoplasmic. A helical transmembrane segment spans residues T23–C43. Over H44 to P259 the chain is Lumenal. V109 is a UDP-N-acetyl-alpha-D-galactosamine binding site. Disulfide bonds link C132/C136 and C144/C194. The short motif at E211–D213 is the DXD motif element. The chain crosses the membrane as a helical span at residues M260–Y280. Residues M281–P287 lie on the Cytoplasmic side of the membrane. Residues G288–V308 form a helical membrane-spanning segment. Residues G309–L403 are Lumenal-facing. A disulfide bridge connects residues C332 and C333. UDP-N-acetyl-alpha-D-galactosamine contacts are provided by T334, P335, and K362.

Belongs to the PGAP4 family. Glycosylated.

The protein resides in the golgi apparatus membrane. In terms of biological role, golgi-resident glycosylphosphatidylinositol (GPI)-N-acetylgalactosamine transferase that catalyzes the N-acetyl-beta-D-galactosamine transfer from an UDP-N-acetyl-alpha-D-galactosamine to the 4-OH-position of first mannose of the glycosylphosphatidylinositol (GPI) of a GPI-anchored protein (GPI-AP). This modification occurs after the fatty acid remodeling step of the GPI-anchor maturation. The chain is GPI-N-acetylgalactosamine transferase PGAP4 from Pongo abelii (Sumatran orangutan).